The sequence spans 198 residues: Recombination protein RecR (198 aa).

The segment at 57–72 adopts a C4-type zinc-finger fold; that stretch reads CSVCGHITDRDPCYIC. A Toprim domain is found at 80 to 175; the sequence is SVVCVVQEPK…KVTRIAHGLP (96 aa).

The protein belongs to the RecR family.

Its function is as follows. May play a role in DNA repair. It seems to be involved in an RecBC-independent recombinational process of DNA repair. It may act with RecF and RecO. This chain is Recombination protein RecR, found in Bacillus anthracis (strain A0248).